An 89-amino-acid chain; its full sequence is UPF0223 protein BPUM_1362 (89 aa).

The protein belongs to the UPF0223 family.

This chain is UPF0223 protein BPUM_1362, found in Bacillus pumilus (strain SAFR-032).